Here is a 242-residue protein sequence, read N- to C-terminus: Ribose-5-phosphate isomerase A (242 aa).

Substrate-binding positions include 39 to 42 (SGST), 95 to 98 (DGAD), and 108 to 111 (KGGG). Residue glutamate 117 is the Proton acceptor of the active site. Lysine 135 is a binding site for substrate.

It belongs to the ribose 5-phosphate isomerase family. As to quaternary structure, homodimer.

The catalysed reaction is aldehydo-D-ribose 5-phosphate = D-ribulose 5-phosphate. The protein operates within carbohydrate degradation; pentose phosphate pathway; D-ribose 5-phosphate from D-ribulose 5-phosphate (non-oxidative stage): step 1/1. Its function is as follows. Catalyzes the reversible conversion of ribose-5-phosphate to ribulose 5-phosphate. In Chlamydia trachomatis serovar A (strain ATCC VR-571B / DSM 19440 / HAR-13), this protein is Ribose-5-phosphate isomerase A.